The primary structure comprises 193 residues: MAAIRKKLVIVGDGACGKTCLLIVFSKDQFPEVYVPTVFENYIADIEVDSKQVELALWDTAGQEDYDRLRPLSYPDTDVILMCFSVDSPDSLENIPEKWTPEVKHFCPNVPIILVGNKKDLRNDEHTRRELIKMKQEPVKPEEGRDMANRISAFGYLECSAKTKDGVREVFEMATRAALQVRKRKKRSGCLLL.

GTP-binding positions include 12-19 (GDGACGKT), 30-37 (FPEVYVPT), 59-63 (DTAGQ), 117-120 (NKKD), and 160-162 (SAK). Tyr-34 carries a (Microbial infection) O-linked (GlcNAc) tyrosine; by Yersinia Afp18 glycan. Cys-190 is modified (cysteine methyl ester). Cys-190 is lipidated: S-geranylgeranyl cysteine. A propeptide spans 191-193 (LLL) (removed in mature form).

Belongs to the small GTPase superfamily. Rho family. In terms of processing, (Microbial infection) Glycosylated at Tyr-34 by Yersinia ruckeri toxin Afp18. Mono-O-GlcNAcylation by Afp18 inhibits RhoA activation by guanine nucleotide exchange factors and blocks RhoA signaling.

It localises to the cell membrane. Regulates a signal transduction pathway linking plasma membrane receptors to the assembly of focal adhesions and actin stress fibers. The chain is Rho-related GTP-binding protein RhoA-D from Danio rerio (Zebrafish).